Reading from the N-terminus, the 689-residue chain is Small ribosomal subunit protein mS39 (689 aa).

Residues 1 to 37 constitute a mitochondrion transit peptide; that stretch reads MAVVSAVRWLGLRSRLGQPLTGRRAGLCEQARSCRFY. Lys126 carries the post-translational modification N6-acetyllysine. PPR repeat units follow at residues 149-183, 184-219, 255-289, 290-330, 331-367, 368-409, 412-446, 454-488, 489-523, and 572-606; these read IKDISEAALKERIELRKVKASVDMFDQLLQAGTTV, SLETTNSLLDLLCYYGDQEPSTDYHFQQTGQSEALE, NEHSYCTMIRGMVKHRAYEQALNLYTELLNNRLHA, DVYT…KVKP, NLQTFNTILKCLRRFHVFARSPALQVLREMKAIGIEP, SLAT…SPKD, DDKFFQSAMSICSSLRDLELAYQVHGLLKTGDNWK, RNFYYSKFFDLICLMEQIDVTLKWYEDLIPSAYFP, HSQTMIHLLQALDVANRLEVIPKIWKDSKEYGHTF, and PATSLNCIAILFLRAGRTQEAWKMLGLFRKHNKIP. The segment at 665–689 is disordered; the sequence is NLTALTSDSDTDSSSDSDSDTSEGK. Positions 673–689 are enriched in acidic residues; sequence SDTDSSSDSDSDTSEGK.

The protein belongs to the mitochondrion-specific ribosomal protein mS39 family. In terms of assembly, component of the mitochondrial small ribosomal subunit (mt-SSU). Mature mammalian 55S mitochondrial ribosomes consist of a small (28S) and a large (39S) subunit. The 28S small subunit contains a 12S ribosomal RNA (12S mt-rRNA) and 30 different proteins. The 39S large subunit contains a 16S rRNA (16S mt-rRNA), a copy of mitochondrial valine transfer RNA (mt-tRNA(Val)), which plays an integral structural role, and 52 different proteins. Associated with the 12S mitochondrial rRNA (12S mt-rRNA). In terms of tissue distribution, abundant in testes, skeletal muscle and heart tissue.

It is found in the mitochondrion. Functionally, mitochondrial RNA-binding protein that has a role in mitochondrial translation. The sequence is that of Small ribosomal subunit protein mS39 (PTCD3) from Homo sapiens (Human).